Reading from the N-terminus, the 349-residue chain is 11-beta-hydroxysteroid dehydrogenase A (349 aa).

The chain crosses the membrane as a helical; Signal-anchor for type II membrane protein span at residues 10-30 (LVAPPFTFFFLCLFLPPYWGL). The short motif at 13–26 (PPFTFFFLCLFLPP) is the Proline-knob element. NADP(+) contacts are provided by residues 54–80 (GASS…SARR), Asp105, and 132–135 (NAAI). Position 184 (Ser184) interacts with substrate. Tyr197 serves as the catalytic Proton acceptor. NADP(+) contacts are provided by residues 197–201 (YSASK) and Lys201.

Belongs to the short-chain dehydrogenases/reductases (SDR) family. As to expression, expressed in seeds (at protein level).

The protein localises to the lipid droplet. It localises to the membrane. It catalyses the reaction an 11beta-hydroxysteroid + NADP(+) = an 11-oxosteroid + NADPH + H(+). Its function is as follows. Has dehydrogenase activity against 11 beta-hydroxysteroid and 17 beta-hydroxysteroid. May be involved in signal transduction regulated by various sterols. This Arachis hypogaea (Peanut) protein is 11-beta-hydroxysteroid dehydrogenase A.